The primary structure comprises 204 residues: Pre-mRNA leakage protein 1 (204 aa).

The region spanning tyrosine 104–isoleucine 172 is the FHA domain.

Belongs to the pre-mRNA retention and splicing (RES) complex composed of at least BUD13, IST3 and PML1.

It localises to the cytoplasm. The protein localises to the nucleus. Its function is as follows. Required for efficient splicing and pre-mRNA nuclear retention. This Saccharomyces cerevisiae (strain ATCC 204508 / S288c) (Baker's yeast) protein is Pre-mRNA leakage protein 1 (PML1).